The sequence spans 1048 residues: B3 domain-containing protein Os02g0598200 (1048 aa).

Residues 1–345 (MDGAVRGQGC…QKERVASSDN (345 aa)) are disordered. Basic residues predominate over residues 16–25 (SFNKTKKKNR). Basic and acidic residues-rich tracts occupy residues 26–134 (NCSD…SDDM), 151–162 (KKNSRNDADEEK), 169–214 (CSDD…GDKK), 243–253 (KNMKSDGDSYK), 281–295 (AKER…MEMK), and 332–345 (LKRE…SSDN). A DNA-binding region (TF-B3 1) is located at residues 375–468 (AFAFFKFVRD…TFSVRVFGID (94 aa)). The disordered stretch occupies residues 505 to 528 (QYQDSEDIHDGPNVSGESPRSKEP). The segment at residues 953–1048 (LQFCIPSTIQ…LAFQVYITRK (96 aa)) is a DNA-binding region (TF-B3 2).

The protein localises to the nucleus. This is B3 domain-containing protein Os02g0598200 from Oryza sativa subsp. japonica (Rice).